The primary structure comprises 188 residues: Large ribosomal subunit protein uL22 (188 aa).

Residues 155-188 (STPEGAKKGKKKKGTKDAVEKSSKRVKTAATAAH) form a disordered region.

This sequence belongs to the universal ribosomal protein uL22 family.

In Agriotes lineatus (Lined click beetle), this protein is Large ribosomal subunit protein uL22 (RpL17).